The sequence spans 150 residues: Large ribosomal subunit protein bL9 (150 aa).

It belongs to the bacterial ribosomal protein bL9 family.

In terms of biological role, binds to the 23S rRNA. The sequence is that of Large ribosomal subunit protein bL9 from Polaromonas naphthalenivorans (strain CJ2).